We begin with the raw amino-acid sequence, 38 residues long: Esterase-5 (38 aa).

Positions serine 1–glycine 38 are disordered.

This sequence belongs to the type-B carboxylesterase/lipase family.

It catalyses the reaction a carboxylic ester + H2O = an alcohol + a carboxylate + H(+). The protein is Esterase-5 (Est-5) of Drosophila mojavensis (Fruit fly).